The following is a 153-amino-acid chain: MKVSASLVLLLAAAVLADDRCPPQDDPEQPPVLLAHPTDCDKFLICNHGTPVVSKCPPGLLWNDSQKQCDYPAQAQCAPGVTPNTEPAPKPSPNCPPEYDPDHMVYIPHETDCGKYYICDPYGVELEQTCPSGLHWNPVVNYCDFPELAQCEE.

The signal sequence occupies residues 1-17 (MKVSASLVLLLAAAVLA). 2 Chitin-binding type-2 domains span residues 18–79 (DDRC…QCAP) and 92–153 (SPNC…QCEE). 2 disulfides stabilise this stretch: Cys56/Cys69 and Cys130/Cys143. Asn63 carries N-linked (GlcNAc...) asparagine glycosylation.

Glycosylated. In terms of tissue distribution, adult peritrophic membrane.

Functionally, binds chitin but not cellulose. May be involved in the spatial organization of PM. The protein is Peritrophin-1 (Aper1) of Anopheles gambiae (African malaria mosquito).